The following is a 358-amino-acid chain: Feruloyl esterase B (358 aa).

The first 18 residues, 1-18 (MAIPLVLLLAWLLPTVFA), serve as a signal peptide directing secretion. A catalytic region spans residues 19-291 (ASLTQVSNFG…VSVVLDWFGI (273 aa)). S136 (charge relay system) is an active-site residue. N179 and N246 each carry an N-linked (GlcNAc...) asparagine glycan. The tract at residues 292–321 (TGGGGGNGGGSGSTTTTTSATTTSTGPTGG) is gly/Thr-rich linker. The segment at 297 to 318 (GNGGGSGSTTTTTSATTTSTGP) is disordered. Low complexity predominate over residues 304 to 318 (STTTTTSATTTSTGP). The 37-residue stretch at 322 to 358 (CTAAHWDQCGGNGYTGCTSCASPYTCQKVNDYYSQCL) folds into the CBM1 domain.

It belongs to the carbohydrate esterase 1 (CE1) family. Feruloyl esterase type B subfamily.

The protein localises to the secreted. It catalyses the reaction feruloyl-polysaccharide + H2O = ferulate + polysaccharide.. Its function is as follows. Involved in degradation of plant cell walls. Hydrolyzes the feruloyl-arabinose ester bond in arabinoxylans as well as the feruloyl-galactose and feruloyl-arabinose ester bonds in pectin. Active against methyl esters of caffeate (MCA), but not sinapate (MSA). This chain is Feruloyl esterase B (faeB), found in Talaromyces stipitatus (strain ATCC 10500 / CBS 375.48 / QM 6759 / NRRL 1006) (Penicillium stipitatum).